Reading from the N-terminus, the 235-residue chain is Serine protease SplA (235 aa).

Residues 1-35 (MNKNVMVKGLTALTILTSLGFAENISNQPHSIAKA) form the signal peptide. Residues histidine 74, aspartate 113, and serine 189 each act as charge relay system in the active site.

Belongs to the peptidase S1B family.

Its subcellular location is the secreted. This chain is Serine protease SplA (splA), found in Staphylococcus aureus (strain Mu3 / ATCC 700698).